Consider the following 75-residue polypeptide: Small ribosomal subunit protein bS18 (75 aa).

The protein belongs to the bacterial ribosomal protein bS18 family. In terms of assembly, part of the 30S ribosomal subunit. Forms a tight heterodimer with protein bS6.

Its function is as follows. Binds as a heterodimer with protein bS6 to the central domain of the 16S rRNA, where it helps stabilize the platform of the 30S subunit. The chain is Small ribosomal subunit protein bS18 from Chromobacterium violaceum (strain ATCC 12472 / DSM 30191 / JCM 1249 / CCUG 213 / NBRC 12614 / NCIMB 9131 / NCTC 9757 / MK).